A 680-amino-acid chain; its full sequence is Galactose oxidase (680 aa).

Residues 1 to 24 (MKHFLSLALCFSSINAVAVTVPHK) form the signal peptide. Positions 25–41 (SGGTGSPEGSLQFLSLR) are excised as a propeptide. The F5/8 type C domain maps to 42–189 (ASAPIGSAIS…SIAEINVFQA (148 aa)). C59 and C68 are oxidised to a cystine. 5 Kelch repeats span residues 223-268 (RVLM…HDMF), 279-321 (QIVV…TMSD), 323-372 (RVFT…LYRS), 436-490 (KILT…VLPD), and 492-544 (STFI…LLLP). The segment at residues 269 to 313 (CPGISMDGNGQIVVTGGNDAKKTSLYDSSSDSWIPGPDMQVARGY) is a cross-link (3'-(S-cysteinyl)-tyrosine (Cys-Tyr)). Y313 is a Cu cation binding site. Residues Y536 and H537 each coordinate Cu cation. The Proton acceptor role is filled by Y536. C556 and C559 form a disulfide bridge. H622 lines the Cu cation pocket.

In terms of assembly, monomer. It depends on Cu(2+) as a cofactor. Post-translationally, galactose oxidase contains a protein-derived free radical cofactor. In the active state, Tyr-313, which is cross-linked to Cys-269 via a thioether bond, is oxidized to a radical and acts with Cu(2+) as a two-electron acceptor in the oxidation reaction. The cross-link is believed to modulate the redox potential of the tyrosyl radical, which is further stabilized by a stacking interaction with Trp-331 in the active site. The post-translational formation of the cross-link is closely linked to the propeptide cleavage event, and both are copper-dependent, autocatalytic processes. The propeptide may act as an intramolecular chaperone, facilitating thioester bond formation and copper binding by positioning of active-site residues, including copper ligands.

It is found in the secreted. The enzyme catalyses D-galactose + O2 = D-galacto-hexodialdose + H2O2. Functionally, catalyzes the sterospecific oxidation of primary alcohols to the corresponding aldehydes. The biologically relevant substrate of the enzyme is not known as the enzyme exhibits broad substrate specificity from small alcohols through sugars to oligo- and polysaccharides. The polypeptide is Galactose oxidase (GAOA) (Gibberella zeae (strain ATCC MYA-4620 / CBS 123657 / FGSC 9075 / NRRL 31084 / PH-1) (Wheat head blight fungus)).